The sequence spans 175 residues: uncharacterized protein (175 aa).

The segment at 113-175 is disordered; that stretch reads AQLPRDSRGN…RTRSGGLERL (63 aa).

This is an uncharacterized protein from Bos taurus (Bovine).